The primary structure comprises 302 residues: Oxygen-dependent coproporphyrinogen-III oxidase (302 aa).

Position 94 (serine 94) interacts with substrate. Histidine 98 and histidine 108 together coordinate a divalent metal cation. The active-site Proton donor is histidine 108. 110–112 (NVR) serves as a coordination point for substrate. The a divalent metal cation site is built by histidine 147 and histidine 177. Residues 242–277 (YVEFNLVYDRGTLFGLQTGGRTESILMSMPPLVRWQ) are important for dimerization. A substrate-binding site is contributed by 260–262 (GGR).

Belongs to the aerobic coproporphyrinogen-III oxidase family. Homodimer. It depends on a divalent metal cation as a cofactor.

The protein localises to the cytoplasm. The catalysed reaction is coproporphyrinogen III + O2 + 2 H(+) = protoporphyrinogen IX + 2 CO2 + 2 H2O. Its pathway is porphyrin-containing compound metabolism; protoporphyrin-IX biosynthesis; protoporphyrinogen-IX from coproporphyrinogen-III (O2 route): step 1/1. Its function is as follows. Involved in the heme biosynthesis. Catalyzes the aerobic oxidative decarboxylation of propionate groups of rings A and B of coproporphyrinogen-III to yield the vinyl groups in protoporphyrinogen-IX. This Shewanella sp. (strain MR-4) protein is Oxygen-dependent coproporphyrinogen-III oxidase.